Reading from the N-terminus, the 632-residue chain is Chaperone protein DnaK (632 aa).

The residue at position 198 (T198) is a Phosphothreonine; by autocatalysis. Residues 524 to 557 (RREAVDAKNHADSLVHSTEKALAEHGSKIEDSER) form a disordered region.

The protein belongs to the heat shock protein 70 family.

In terms of biological role, acts as a chaperone. The sequence is that of Chaperone protein DnaK from Nitrobacter hamburgensis (strain DSM 10229 / NCIMB 13809 / X14).